The sequence spans 208 residues: MAKFIKSAHYFDQYPIDKQFEICVIGRSNVGKSSLINALANKKIARTSNTPGRTQLVNFFDFNNFRLVDLPGYGFAKVSKEKQTDLAAIIDQYLGYRQNLCAVFQICDINVLTNDDVEMSRYFENQKYAHFVVLNKLDKVNKSYFNNNKHKIAKFLNISTDRLLCVSAQNNINIITLFALMKKVVIQAKQEKILSKKEEKMSSEEEIK.

An EngB-type G domain is found at 18 to 187; that stretch reads KQFEICVIGR…FALMKKVVIQ (170 aa). GTP contacts are provided by residues 26–33, 52–56, 69–72, 135–138, and 166–168; these read GRSNVGKS, GRTQL, DLPG, NKLD, and VSA. Mg(2+) contacts are provided by S33 and T54.

The protein belongs to the TRAFAC class TrmE-Era-EngA-EngB-Septin-like GTPase superfamily. EngB GTPase family. Mg(2+) serves as cofactor.

In terms of biological role, necessary for normal cell division and for the maintenance of normal septation. This Ureaplasma parvum serovar 3 (strain ATCC 27815 / 27 / NCTC 11736) protein is Probable GTP-binding protein EngB.